The sequence spans 462 residues: Serine--tRNA ligase, cytoplasmic (462 aa).

Residue lysine 241 forms a Glycyl lysine isopeptide (Lys-Gly) (interchain with G-Cter in URM1) linkage. 246-248 (TSE) contributes to the L-serine binding site. ATP-binding positions include 279–281 (RRE) and valine 295. Glutamate 302 provides a ligand contact to L-serine. Residues lysine 350 and lysine 351 each participate in a glycyl lysine isopeptide (Lys-Gly) (interchain with G-Cter in URM1) cross-link. An ATP-binding site is contributed by 366-369 (ELVS). A cysteine persulfide mark is found at cysteine 373 and cysteine 400. Threonine 404 serves as a coordination point for L-serine.

Belongs to the class-II aminoacyl-tRNA synthetase family. Type-1 seryl-tRNA synthetase subfamily. Homodimer; the tRNA molecule probably binds across the dimer. Interacts with ABP140; interaction is required for the tRNA N(3)-methylcytidine methyltransferase activity of ABP140. Post-translationally, conjugated to URM1, a ubiquitin-like protein, in response to oxidative stresses. The attachment of URM1 to lysine residues exclusively depends on the presence of a peroxidatic cysteine in the target protein, with low specificity for the particular residue, motif, or structural context at which urmylation can occur. The URM1-conjugation reaction is mechanistically and directly coupled to the process of cysteine persulfidation, transfering the sulfur atom of the URM1 thiocarboxyl group to redox-active cysteine residues in the target protein if it is exposed to oxidative conditions. In terms of processing, persulfidated on specific redox-active cysteine residues. Persulfidation (also called protein S-sulfhydration) may provide a molecular mechanism that enables cells to protect vulnerable cysteine residues from reactive oxygen species (ROS) under stress conditions.

It is found in the cytoplasm. The protein localises to the cytosol. It catalyses the reaction tRNA(Ser) + L-serine + ATP = L-seryl-tRNA(Ser) + AMP + diphosphate + H(+). In terms of biological role, catalyzes the attachment of serine to tRNA(Ser) in a two-step reaction: serine is first activated by ATP to form Ser-AMP and then transferred to the acceptor end of tRNA(Ser). In Saccharomyces cerevisiae (strain ATCC 204508 / S288c) (Baker's yeast), this protein is Serine--tRNA ligase, cytoplasmic (SES1).